A 101-amino-acid polypeptide reads, in one-letter code: Large ribosomal subunit protein uL24 (101 aa).

The protein belongs to the universal ribosomal protein uL24 family. As to quaternary structure, part of the 50S ribosomal subunit.

One of two assembly initiator proteins, it binds directly to the 5'-end of the 23S rRNA, where it nucleates assembly of the 50S subunit. Functionally, one of the proteins that surrounds the polypeptide exit tunnel on the outside of the subunit. The protein is Large ribosomal subunit protein uL24 of Streptococcus pyogenes serotype M1.